Consider the following 464-residue polypeptide: GDNF family receptor alpha-2 (464 aa).

Positions M1–A21 are cleaved as a signal peptide. 14 disulfides stabilise this stretch: C40–C93, C47–C53, C63–C78, C95–C105, C161–C222, C168–C174, C185–C200, C195–C241, C224–C229, C251–C323, C258–C264, C275–C293, C285–C347, and C325–C335. A glycan (N-linked (GlcNAc...) asparagine) is linked at N52. Residues N357 and N413 are each glycosylated (N-linked (GlcNAc...) asparagine). The GPI-anchor amidated serine moiety is linked to residue S444. Residues R445–L464 constitute a propeptide, removed in mature form.

The protein belongs to the GDNFR family. As to quaternary structure, interacts with NRTN ligand and RET: forms a 2:2:2 ternary complex composed of NRTN ligand, GFRA2 and RET receptor. Also forms a 4:4:4 tetrameric complex composed of 4 copies of NRTN ligand, GFRA2 and RET receptor, which prevents endocytosis of RET. Interacts with SORL1.

It is found in the cell membrane. Its function is as follows. Receptor for neurturin (NRTN), a growth factor that supports the survival of sympathetic neurons. NRTN-binding leads to autophosphorylation and activation of the RET receptor. Also able to mediate GDNF signaling through the RET tyrosine kinase receptor. This Pongo abelii (Sumatran orangutan) protein is GDNF family receptor alpha-2 (GFRA2).